The sequence spans 247 residues: Enolase-phosphatase E1 (247 aa).

Mg(2+)-binding residues include aspartate 12 and glutamate 14. Substrate-binding positions include 141–142 (SS) and lysine 175. A Mg(2+)-binding site is contributed by aspartate 200.

This sequence belongs to the HAD-like hydrolase superfamily. MasA/MtnC family. Monomer. The cofactor is Mg(2+).

It localises to the cytoplasm. The protein localises to the nucleus. The enzyme catalyses 5-methylsulfanyl-2,3-dioxopentyl phosphate + H2O = 1,2-dihydroxy-5-(methylsulfanyl)pent-1-en-3-one + phosphate. It participates in amino-acid biosynthesis; L-methionine biosynthesis via salvage pathway; L-methionine from S-methyl-5-thio-alpha-D-ribose 1-phosphate: step 3/6. Its pathway is amino-acid biosynthesis; L-methionine biosynthesis via salvage pathway; L-methionine from S-methyl-5-thio-alpha-D-ribose 1-phosphate: step 4/6. Bifunctional enzyme that catalyzes the enolization of 2,3-diketo-5-methylthiopentyl-1-phosphate (DK-MTP-1-P) into the intermediate 2-hydroxy-3-keto-5-methylthiopentenyl-1-phosphate (HK-MTPenyl-1-P), which is then dephosphorylated to form the acireductone 1,2-dihydroxy-3-keto-5-methylthiopentene (DHK-MTPene). In Drosophila willistoni (Fruit fly), this protein is Enolase-phosphatase E1.